Here is a 207-residue protein sequence, read N- to C-terminus: Interleukin-6 (207 aa).

A signal peptide spans 1–20; the sequence is MNSLSTSAFSLGLLLVMATA. A disulfide bridge links C67 with C73. At S76 the chain carries Phosphoserine. C96 and C106 are disulfide-bonded.

The protein belongs to the IL-6 superfamily. As to quaternary structure, component of a hexamer of two molecules each of IL6, IL6R and IL6ST; first binds to IL6R to associate with the signaling subunit IL6ST. Interacts with IL6R (via the N-terminal ectodomain); this interaction may be affected by IL6R-binding with SORL1, hence decreasing IL6 cis signaling. Interacts with SORL1 (via the N-terminal ectodomain); this interaction leads to IL6 internalization and lysosomal degradation. May form a trimeric complex with the soluble SORL1 ectodomain and soluble IL6R receptor; this interaction might stabilize circulating IL6, hence promoting IL6 trans signaling.

The protein resides in the secreted. In terms of biological role, cytokine with a wide variety of biological functions in immunity, tissue regeneration, and metabolism. Binds to IL6R, then the complex associates to the signaling subunit IL6ST/gp130 to trigger the intracellular IL6-signaling pathway. The interaction with the membrane-bound IL6R and IL6ST stimulates 'classic signaling', whereas the binding of IL6 and soluble IL6R to IL6ST stimulates 'trans-signaling'. Alternatively, 'cluster signaling' occurs when membrane-bound IL6:IL6R complexes on transmitter cells activate IL6ST receptors on neighboring receiver cells. Its function is as follows. IL6 is a potent inducer of the acute phase response. Rapid production of IL6 contributes to host defense during infection and tissue injury, but excessive IL6 synthesis is involved in disease pathology. In the innate immune response, is synthesized by myeloid cells, such as macrophages and dendritic cells, upon recognition of pathogens through toll-like receptors (TLRs) at the site of infection or tissue injury. In the adaptive immune response, is required for the differentiation of B cells into immunoglobulin-secreting cells. Plays a major role in the differentiation of CD4(+) T cell subsets. Essential factor for the development of T follicular helper (Tfh) cells that are required for the induction of germinal-center formation. Required to drive naive CD4(+) T cells to the Th17 lineage. Also required for proliferation of myeloma cells and the survival of plasmablast cells. Functionally, acts as an essential factor in bone homeostasis and on vessels directly or indirectly by induction of VEGF, resulting in increased angiogenesis activity and vascular permeability. Induces, through 'trans-signaling' and synergistically with IL1B and TNF, the production of VEGF. Involved in metabolic controls, is discharged into the bloodstream after muscle contraction increasing lipolysis and improving insulin resistance. 'Trans-signaling' in central nervous system also regulates energy and glucose homeostasis. Mediates, through GLP-1, crosstalk between insulin-sensitive tissues, intestinal L cells and pancreatic islets to adapt to changes in insulin demand. Also acts as a myokine. Plays a protective role during liver injury, being required for maintenance of tissue regeneration. Also has a pivotal role in iron metabolism by regulating HAMP/hepcidin expression upon inflammation or bacterial infection. Through activation of IL6ST-YAP-NOTCH pathway, induces inflammation-induced epithelial regeneration. This chain is Interleukin-6 (IL6), found in Vulpes vulpes (Red fox).